The chain runs to 360 residues: Inward rectifier potassium channel 13 (360 aa).

Residues 1 to 50 (MDSRNCKVNAPLLSQRYRRMVTKDGHSTLQMDGAQRGLVYLRDAWGILMD) lie on the Cytoplasmic side of the membrane. A helical membrane pass occupies residues 51-77 (MRWRWMMLVFSASFVVHWLVFAVLWYA). Over 78 to 105 (VAEMNGDLEIDHDVPPENHTICVKHITS) the chain is Extracellular. Positions 106-122 (FTAAFSFSLETQLTIGY) form an intramembrane region, helical; Pore-forming. The short motif at 119 to 124 (TIGYGT) is the Selectivity filter element. The Extracellular segment spans residues 123 to 131 (GTMFPSGDC). Residues 132–157 (PSAIALLAIQMLLGLMLEAFITGAFV) form a helical membrane-spanning segment. Topologically, residues 158-360 (AKIARPKNRA…FQIAETGLTE (203 aa)) are cytoplasmic. Position 201 is a phosphoserine; by PKC (Ser201). Ser287 carries the post-translational modification Phosphoserine; by PKA.

It belongs to the inward rectifier-type potassium channel (TC 1.A.2.1) family. KCNJ13 subfamily. Homotetramer. Interacts with RAB28; the interaction may facilitate cone outer segments phagocytosis. In terms of processing, phosphorylation at Ser-201 by PKC strongly inhibits ionic currents, while phosphorylation at Ser-287 by PKA increases them.

The protein resides in the membrane. It is found in the cell membrane. The enzyme catalyses K(+)(in) = K(+)(out). With respect to regulation, inhibited by Ba(2+) and Cs(+), although sensitivity to those inhibitors is much lower than in other Kir channels. Functionally, inward rectifier potassium channels are characterized by a greater tendency to allow potassium to flow into the cell rather than out of it. Their voltage dependence is regulated by the concentration of extracellular potassium; as external potassium is raised, the voltage range of the channel opening shifts to more positive voltages. The inward rectification is mainly due to the blockage of outward current by internal magnesium. KCNJ13 has a very low single channel conductance, low sensitivity to block by external barium and cesium, and no dependence of its inward rectification properties on the internal blocking particle magnesium. This Rattus norvegicus (Rat) protein is Inward rectifier potassium channel 13 (Kcnj13).